The chain runs to 445 residues: UPF0210 protein SPJ_0248 (445 aa).

Belongs to the UPF0210 family. As to quaternary structure, homodimer.

The chain is UPF0210 protein SPJ_0248 from Streptococcus pneumoniae (strain JJA).